Reading from the N-terminus, the 556-residue chain is uncharacterized protein (556 aa).

The segment at 69–129 is disordered; the sequence is RRGHTSGHAS…SSARSSSTSG (61 aa). Low complexity-rich tracts occupy residues 74 to 85 and 93 to 129; these read SGHASEHTSSSR and SMSSSSESDSDSVSSESNPKSYSDSSTSSARSSSTSG. Residues 379–399 traverse the membrane as a helical segment; that stretch reads LGLYIFIGVLLGLIGVIGLFI. Residues 498 to 541 form an RING-type; atypical zinc finger; it reads CTICLCEYSEESPLYRELPCHHIFHPACIDPYLLKNSDLCPLCK.

It is found in the vacuole membrane. The protein resides in the cell membrane. This is an uncharacterized protein from Schizosaccharomyces pombe (strain 972 / ATCC 24843) (Fission yeast).